Consider the following 280-residue polypeptide: Protein scylla (280 aa).

The segment at 39-96 (LMSKKAKTTTGGSSNGSNATATSTTTSTSSSIKHKQPAGSSNNNVGQSQSKKTKPSGS) is disordered. Composition is skewed to low complexity over residues 46 to 69 (TTTG…TSSS) and 77 to 96 (GSSN…PSGS).

The protein belongs to the DDIT4 family.

It is found in the cytoplasm. Functionally, inhibits cell growth by regulating the Tor pathway upstream of the Tsc1-Tsc2 complex and downstream of Akt1. Acts as a cell death activator during head development. The polypeptide is Protein scylla (scyl) (Drosophila melanogaster (Fruit fly)).